A 244-amino-acid chain; its full sequence is ATP synthase subunit 4, mitochondrial (244 aa).

A mitochondrion-targeting transit peptide spans M1–T36.

The protein belongs to the eukaryotic ATPase B chain family. In terms of assembly, F-type ATPases have 2 components, CF(1) - the catalytic core - and CF(0) - the membrane proton channel. In yeast, the dimeric form of ATP synthase consists of 17 polypeptides: alpha, beta, gamma, delta, epsilon, 4 (B), 5 (OSCP), 6 (A), 8, 9 (C), d, E (Tim11), f, g, h, i/j and k.

The protein resides in the mitochondrion. It localises to the mitochondrion inner membrane. Its function is as follows. Mitochondrial membrane ATP synthase (F(1)F(0) ATP synthase or Complex V) produces ATP from ADP in the presence of a proton gradient across the membrane which is generated by electron transport complexes of the respiratory chain. F-type ATPases consist of two structural domains, F(1) - containing the extramembraneous catalytic core, and F(0) - containing the membrane proton channel, linked together by a central stalk and a peripheral stalk. During catalysis, ATP synthesis in the catalytic domain of F(1) is coupled via a rotary mechanism of the central stalk subunits to proton translocation. Part of the complex F(0) domain and the peripheric stalk, which acts as a stator to hold the catalytic alpha(3)beta(3) subcomplex and subunit a/ATP6 static relative to the rotary elements. In Schizosaccharomyces pombe (strain 972 / ATCC 24843) (Fission yeast), this protein is ATP synthase subunit 4, mitochondrial (atp4).